Consider the following 210-residue polypeptide: Thymidylate kinase (210 aa).

Residue 9-16 (GLEGAGKS) coordinates ATP.

The protein belongs to the thymidylate kinase family.

The enzyme catalyses dTMP + ATP = dTDP + ADP. In terms of biological role, phosphorylation of dTMP to form dTDP in both de novo and salvage pathways of dTTP synthesis. The protein is Thymidylate kinase of Aliivibrio salmonicida (strain LFI1238) (Vibrio salmonicida (strain LFI1238)).